Here is a 1059-residue protein sequence, read N- to C-terminus: IQ motif-containing protein H (1059 aa).

The stretch at 6-35 (KNKDEVGNILVKVQDDLRQLKKNIVQFTVQ) forms a coiled coil. The tract at residues 245–267 (MESAESRLLRAPPPSAASASSDN) is disordered. An IQ domain is found at 401-430 (HQAAAVRIQTCWRRYSARTAYLIRLRSKWA).

This is IQ motif-containing protein H (iqch) from Danio rerio (Zebrafish).